Reading from the N-terminus, the 826-residue chain is 1,4-alpha-glucan-branching enzyme 1, chloroplastic/amyloplastic (826 aa).

The transit peptide at 1 to 58 (ATTTTTTHNSKNKQYLAKQKPVELTLGYQNPNGCKVCSFGSKGSIYQKVSSGFKGVSV) directs the protein to the chloroplast. The Nucleophile role is filled by Asp-409. Glu-464 functions as the Proton donor in the catalytic mechanism. The disordered stretch occupies residues 782–813 (DTDVARIPDVSMESEDSNLDRIEDNSEDAVDA).

It belongs to the glycosyl hydrolase 13 family. GlgB subfamily. Monomer. In terms of tissue distribution, expressed in roots, leaves, stipules, pods and flowers.

The protein localises to the plastid. It localises to the chloroplast. It is found in the amyloplast. The enzyme catalyses Transfers a segment of a (1-&gt;4)-alpha-D-glucan chain to a primary hydroxy group in a similar glucan chain.. Its pathway is glycan biosynthesis; starch biosynthesis. In terms of biological role, catalyzes the formation of the alpha-1,6-glucosidic linkages in starch by scission of a 1,4-alpha-linked oligosaccharide from growing alpha-1,4-glucan chains and the subsequent attachment of the oligosaccharide to the alpha-1,6 position. May preferentially transfer long chains during branching. The protein is 1,4-alpha-glucan-branching enzyme 1, chloroplastic/amyloplastic (SBEII) of Pisum sativum (Garden pea).